A 110-amino-acid chain; its full sequence is UPF0122 protein STER_0914 (110 aa).

It belongs to the UPF0122 family.

Might take part in the signal recognition particle (SRP) pathway. This is inferred from the conservation of its genetic proximity to ftsY/ffh. May be a regulatory protein. In Streptococcus thermophilus (strain ATCC BAA-491 / LMD-9), this protein is UPF0122 protein STER_0914.